We begin with the raw amino-acid sequence, 376 residues long: Carbohydrate sulfotransferase 14 (376 aa).

Residues 1-30 (MFPRPLTPLAAPKSAETLGRTPRRAPLGRA) form a disordered region. Residues 1 to 39 (MFPRPLTPLAAPKSAETLGRTPRRAPLGRARAGLGGPPL) are Cytoplasmic-facing. The segment covering 18–30 (LGRTPRRAPLGRA) has biased composition (low complexity). A helical; Signal-anchor for type II membrane protein membrane pass occupies residues 40–60 (LLPSMLMFAVIVASSGLLLMI). The Lumenal portion of the chain corresponds to 61-376 (ERGILSEMKP…PNVTKEACHQ (316 aa)). The disordered stretch occupies residues 76-96 (PSHKGAAWSGTDPKPRGLSLD). Asn-110 carries an N-linked (GlcNAc...) asparagine glycan. 3'-phosphoadenylyl sulfate is bound by residues 155 to 161 (PKVACSN) and 213 to 221 (RDPLERLLS). An N-linked (GlcNAc...) asparagine glycan is attached at Asn-368.

This sequence belongs to the sulfotransferase 2 family.

Its subcellular location is the golgi apparatus membrane. The catalysed reaction is dermatan + n 3'-phosphoadenylyl sulfate = dermatan 4'-sulfate + n adenosine 3',5'-bisphosphate + n H(+). Catalyzes the transfer of sulfate to position 4 of the N-acetylgalactosamine (GalNAc) residue of dermatan sulfate. Plays a pivotal role in the formation of 4-0-sulfated IdoA blocks in dermatan sulfate. Transfers sulfate to the C-4 hydroxyl of beta1,4-linked GalNAc that is substituted with an alpha-linked iduronic acid (IdoUA) at the C-3 hydroxyl. Transfers sulfate more efficiently to GalNAc residues in -IdoUA-GalNAc-IdoUA- than in -GlcUA-GalNAc-GlcUA-sequences. Has preference for partially desulfated dermatan sulfate. Addition of sulfate to GalNAc may occur immediately after epimerization of GlcUA to IdoUA. Appears to have an important role in the formation of the cerebellar neural network during postnatal brain development. The protein is Carbohydrate sulfotransferase 14 (Chst14) of Mus musculus (Mouse).